Reading from the N-terminus, the 603-residue chain is Sorting nexin-41 (603 aa).

A disordered region spans residues 1–36 (MNSFRESDEEDNNPFSGTNHLYASGIGAVPEGDDDF). Residues 121–241 (AEGSLGALRI…QKFLNPEYIW (121 aa)) form the PX domain. A 1,2-diacyl-sn-glycero-3-phospho-(1D-myo-inositol-3-phosphate) contacts are provided by R159, S161, K185, and R208.

Belongs to the sorting nexin family.

It is found in the endosome membrane. It localises to the endomembrane system. Functionally, may be required for cytoplasm to vacuole transport (Cvt) and pexophagy. The polypeptide is Sorting nexin-41 (SNX41) (Eremothecium gossypii (strain ATCC 10895 / CBS 109.51 / FGSC 9923 / NRRL Y-1056) (Yeast)).